The following is a 102-amino-acid chain: Alpha-hemoglobin-stabilizing protein (102 aa).

Belongs to the AHSP family. Monomer. Forms a heterodimer with free alpha-hemoglobin. Does not bind beta-hemoglobin nor alpha(2)beta(2) hemoglobin A. Expressed in blood and bone marrow.

Its subcellular location is the cytoplasm. In terms of biological role, acts as a chaperone to prevent the harmful aggregation of alpha-hemoglobin during normal erythroid cell development. Specifically protects free alpha-hemoglobin from precipitation. It is predicted to modulate pathological states of alpha-hemoglobin excess such as beta-thalassemia. The polypeptide is Alpha-hemoglobin-stabilizing protein (AHSP) (Homo sapiens (Human)).